Consider the following 190-residue polypeptide: MIDPDGYRPNVGIVLMCRDGQVFWGRRVRLDGWQFPQGGMHSDETPVEAMYRELNEETGLLPEHVQLLGATPGWLRYRLPSQAVRCNRSQMCIGQKQVWFLLQLIGDESHVQLDQSENPEFDHWRWVSFWYPIEHVVMFKRGVYARALCQLASLAQQVVGLEVGTMPQYVQDICLLNVGYKHLPNWVSRY.

The region spanning 6 to 149 is the Nudix hydrolase domain; it reads GYRPNVGIVL…KRGVYARALC (144 aa). The Nudix box motif lies at 38-59; that stretch reads GGMHSDETPVEAMYRELNEETG.

The protein belongs to the Nudix hydrolase family. RppH subfamily. A divalent metal cation is required as a cofactor.

In terms of biological role, accelerates the degradation of transcripts by removing pyrophosphate from the 5'-end of triphosphorylated RNA, leading to a more labile monophosphorylated state that can stimulate subsequent ribonuclease cleavage. The chain is RNA pyrophosphohydrolase from Xylella fastidiosa (strain 9a5c).